The following is a 428-amino-acid chain: Putative zinc metalloprotease SACOL1281 (428 aa).

Histidine 21 contributes to the Zn(2+) binding site. Glutamate 22 is a catalytic residue. Histidine 25 provides a ligand contact to Zn(2+). Transmembrane regions (helical) follow at residues 172 to 194, 309 to 331, 352 to 374, and 401 to 420; these read FLTLFAGPLFNFILALVLFIGLA, GSTYIFTAVVGMLASIFTGGFSF, IISLIGYTALLSVNLGIMNLIPI, and TTIIAIGAIFMVVIMILVTW. Residues 186–269 form the PDZ domain; it reads ALVLFIGLAY…TKSVELTPKK (84 aa).

This sequence belongs to the peptidase M50B family. Zn(2+) is required as a cofactor.

The protein resides in the cell membrane. The chain is Putative zinc metalloprotease SACOL1281 from Staphylococcus aureus (strain COL).